The primary structure comprises 93 residues: Pyrimidine/purine nucleoside phosphorylase (93 aa).

It belongs to the nucleoside phosphorylase PpnP family.

The enzyme catalyses a purine D-ribonucleoside + phosphate = a purine nucleobase + alpha-D-ribose 1-phosphate. It carries out the reaction adenosine + phosphate = alpha-D-ribose 1-phosphate + adenine. It catalyses the reaction cytidine + phosphate = cytosine + alpha-D-ribose 1-phosphate. The catalysed reaction is guanosine + phosphate = alpha-D-ribose 1-phosphate + guanine. The enzyme catalyses inosine + phosphate = alpha-D-ribose 1-phosphate + hypoxanthine. It carries out the reaction thymidine + phosphate = 2-deoxy-alpha-D-ribose 1-phosphate + thymine. It catalyses the reaction uridine + phosphate = alpha-D-ribose 1-phosphate + uracil. The catalysed reaction is xanthosine + phosphate = alpha-D-ribose 1-phosphate + xanthine. Its function is as follows. Catalyzes the phosphorolysis of diverse nucleosides, yielding D-ribose 1-phosphate and the respective free bases. Can use uridine, adenosine, guanosine, cytidine, thymidine, inosine and xanthosine as substrates. Also catalyzes the reverse reactions. The polypeptide is Pyrimidine/purine nucleoside phosphorylase (Aliivibrio fischeri (strain ATCC 700601 / ES114) (Vibrio fischeri)).